A 143-amino-acid polypeptide reads, in one-letter code: MAKKIEAYIKLQVAAGQANPSPPVGPALGQRGVNIMEFCKAFNAKTQGMEPGLPIPTVITVYSDRSFTFITKTPPAPVLLKKAAGIKSGSGRPNTDKVGTVTRAQLEEIAKTKEPDLTAADMEAAVRTIAGTARSMGLNVEGL.

Belongs to the universal ribosomal protein uL11 family. In terms of assembly, part of the ribosomal stalk of the 50S ribosomal subunit. Interacts with L10 and the large rRNA to form the base of the stalk. L10 forms an elongated spine to which L12 dimers bind in a sequential fashion forming a multimeric L10(L12)X complex. One or more lysine residues are methylated.

Its function is as follows. Forms part of the ribosomal stalk which helps the ribosome interact with GTP-bound translation factors. The protein is Large ribosomal subunit protein uL11 of Marinobacter nauticus (strain ATCC 700491 / DSM 11845 / VT8) (Marinobacter aquaeolei).